Here is a 239-residue protein sequence, read N- to C-terminus: Ribosomal RNA small subunit methyltransferase G (239 aa).

S-adenosyl-L-methionine contacts are provided by residues G77, F82, 128 to 129, and R147; that span reads AE.

Belongs to the methyltransferase superfamily. RNA methyltransferase RsmG family.

The protein resides in the cytoplasm. Specifically methylates the N7 position of guanine in position 535 of 16S rRNA. The sequence is that of Ribosomal RNA small subunit methyltransferase G from Bacillus cereus (strain AH187).